Here is a 259-residue protein sequence, read N- to C-terminus: Proteasome subunit alpha (259 aa).

Belongs to the peptidase T1A family. The 20S proteasome core is composed of 14 alpha and 14 beta subunits that assemble into four stacked heptameric rings, resulting in a barrel-shaped structure. The two inner rings, each composed of seven catalytic beta subunits, are sandwiched by two outer rings, each composed of seven alpha subunits. The catalytic chamber with the active sites is on the inside of the barrel. Has a gated structure, the ends of the cylinder being occluded by the N-termini of the alpha-subunits. Is capped at one or both ends by the proteasome regulatory ATPase, PAN.

The protein resides in the cytoplasm. Its activity is regulated as follows. The formation of the proteasomal ATPase PAN-20S proteasome complex, via the docking of the C-termini of PAN into the intersubunit pockets in the alpha-rings, triggers opening of the gate for substrate entry. Interconversion between the open-gate and close-gate conformations leads to a dynamic regulation of the 20S proteasome proteolysis activity. Component of the proteasome core, a large protease complex with broad specificity involved in protein degradation. This Methanococcus maripaludis (strain C5 / ATCC BAA-1333) protein is Proteasome subunit alpha.